A 464-amino-acid chain; its full sequence is UNC93-like protein 3 (464 aa).

11 helical membrane-spanning segments follow: residues 31-51 (VHIL…AQNL), 62-82 (ISLG…SLVV), 84-104 (LMGS…FVAA), 110-130 (WFTM…IWVG), 160-180 (EFWA…LALL), 192-212 (TLLM…MFFI), 251-271 (LLIV…WAEF), 275-295 (IVTP…YGAL), 313-333 (ITFI…WLLL), 341-361 (VLGT…DGIL), and 392-412 (IAIV…IVML).

The protein belongs to the unc-93 family.

The protein resides in the membrane. The polypeptide is UNC93-like protein 3 (Arabidopsis thaliana (Mouse-ear cress)).